The sequence spans 196 residues: NADH dehydrogenase [ubiquinone] 1 alpha subcomplex assembly factor 3 (196 aa).

The N-terminal 93 residues, M1 to S93, are a transit peptide targeting the mitochondrion.

The protein belongs to the NDUFAF3 family. In terms of assembly, together with NdufAF4 associates with mitochondrial complex I assembly intermediates during its biogenesis.

The protein resides in the mitochondrion. Its function is as follows. Involved in the assembly of mitochondrial NADH:ubiquinone oxidoreductase complex (complex I). Together with NdufAF4, involved in biogenesis of complex 1 modules N, Q and P-peripheral, but not the P-distal module. Required for recruitment of the complex I assembly factor Timmdc1 to complex 1 assembly intermediates. This Drosophila melanogaster (Fruit fly) protein is NADH dehydrogenase [ubiquinone] 1 alpha subcomplex assembly factor 3.